Here is a 500-residue protein sequence, read N- to C-terminus: NAD(P)H-quinone oxidoreductase chain 4, chloroplastic (500 aa).

Transmembrane regions (helical) follow at residues 4–24 (FPWL…IFFL), 35–55 (YTIC…CYHF), 87–107 (IGPI…AWPV), 113–130 (LFHF…GSFS), 134–154 (LLLF…LLCM), 167–187 (FILY…GLAL), 208–228 (VLEI…SPII), 242–262 (HYST…YGLI), 274–294 (SIFS…AALT), 305–325 (IAYS…SLTD), 330–350 (GALL…FLAG), 386–406 (LALP…GIIT), 411–431 (LLIP…LTPI), and 462–482 (LFLS…PDFV).

It belongs to the complex I subunit 4 family.

It is found in the plastid. The protein resides in the chloroplast thylakoid membrane. The catalysed reaction is a plastoquinone + NADH + (n+1) H(+)(in) = a plastoquinol + NAD(+) + n H(+)(out). It catalyses the reaction a plastoquinone + NADPH + (n+1) H(+)(in) = a plastoquinol + NADP(+) + n H(+)(out). This Nicotiana tabacum (Common tobacco) protein is NAD(P)H-quinone oxidoreductase chain 4, chloroplastic (ndhD).